The following is an 87-amino-acid chain: U3-theraphotoxin-Hhn1m (87 aa).

The N-terminal stretch at 1–24 (MVNMKASMFLTFAGLVLLFVVCYA) is a signal peptide. Positions 25-52 (SESEEKEFPKEMLSSIFAVDNDFKQEER) are excised as a propeptide. Disulfide bonds link Cys-54–Cys-67, Cys-61–Cys-72, and Cys-66–Cys-79.

It belongs to the neurotoxin 10 (Hwtx-1) family. 51 (Hntx-8) subfamily. Hntx-8 sub-subfamily. In terms of tissue distribution, expressed by the venom gland.

The protein localises to the secreted. Functionally, ion channel inhibitor. This is U3-theraphotoxin-Hhn1m from Cyriopagopus hainanus (Chinese bird spider).